A 117-amino-acid chain; its full sequence is Ribosome-binding factor A (117 aa).

The protein belongs to the RbfA family. In terms of assembly, monomer. Binds 30S ribosomal subunits, but not 50S ribosomal subunits or 70S ribosomes.

It localises to the cytoplasm. Functionally, one of several proteins that assist in the late maturation steps of the functional core of the 30S ribosomal subunit. Associates with free 30S ribosomal subunits (but not with 30S subunits that are part of 70S ribosomes or polysomes). Required for efficient processing of 16S rRNA. May interact with the 5'-terminal helix region of 16S rRNA. This is Ribosome-binding factor A from Blochmanniella floridana.